We begin with the raw amino-acid sequence, 181 residues long: MSKSEHNLIWIDLEMTGLDPERDRIIEIATIVTDANLNILDEGPVIAVHQSDEQLALMDKWNVRTHTGSGLVERVKASKIDDREAEKATIEFLEKWVPAGASPICGNSVSQDRRFLFRYMPELEAYFHYRYLDVSTLKELARRWKPEILAGLKKQNTHQALDDIRESVAELAYYREHFIQL.

The region spanning 8 to 171 (LIWIDLEMTG…DDIRESVAEL (164 aa)) is the Exonuclease domain. Tyr-129 is a catalytic residue.

It belongs to the oligoribonuclease family.

It localises to the cytoplasm. 3'-to-5' exoribonuclease specific for small oligoribonucleotides. This chain is Oligoribonuclease, found in Photorhabdus laumondii subsp. laumondii (strain DSM 15139 / CIP 105565 / TT01) (Photorhabdus luminescens subsp. laumondii).